The primary structure comprises 648 residues: Rho GTPase-activating protein 25 (648 aa).

The region spanning 46–151 (RPIKVGWLKK…WVKFLRRVAG (106 aa)) is the PH domain. The Rho-GAP domain maps to 160-354 (QRLDETVAYE…MMIRDHEVLF (195 aa)). Residues 356 to 559 (KSKDAPISPP…DLDSLQRTVQ (204 aa)) are disordered. Ser363, Ser396, and Ser403 each carry phosphoserine. Residues 393-410 (RTDSFSNTASSPDATSPT) show a composition bias toward polar residues. At Thr407 the chain carries Phosphothreonine. The segment covering 417-431 (QHQEDSGKAPRENPG) has biased composition (basic and acidic residues). Composition is skewed to polar residues over residues 453 to 462 (SAFQGTTSSK) and 497 to 515 (DQRTSTYDNVPTSPQSQGN). Ser537 carries the phosphoserine modification. Residues 540–641 (EAGSKNSGED…VKEFVKSMEK (102 aa)) are a coiled coil.

In terms of biological role, GTPase activator for the Rho-type GTPases by converting them to an inactive GDP-bound state. The protein is Rho GTPase-activating protein 25 (Arhgap25) of Mus musculus (Mouse).